Consider the following 139-residue polypeptide: Small ribosomal subunit protein uS12 (139 aa).

The tract at residues Met-1 to Ala-21 is disordered. A compositionally biased stretch (basic residues) spans Ile-8–Lys-18. Asp-102 carries the 3-methylthioaspartic acid modification.

Belongs to the universal ribosomal protein uS12 family. Part of the 30S ribosomal subunit. Contacts proteins S8 and S17. May interact with IF1 in the 30S initiation complex.

Functionally, with S4 and S5 plays an important role in translational accuracy. Its function is as follows. Interacts with and stabilizes bases of the 16S rRNA that are involved in tRNA selection in the A site and with the mRNA backbone. Located at the interface of the 30S and 50S subunits, it traverses the body of the 30S subunit contacting proteins on the other side and probably holding the rRNA structure together. The combined cluster of proteins S8, S12 and S17 appears to hold together the shoulder and platform of the 30S subunit. This chain is Small ribosomal subunit protein uS12, found in Aster yellows witches'-broom phytoplasma (strain AYWB).